A 457-amino-acid polypeptide reads, in one-letter code: Pancreatic triacylglycerol lipase (457 aa).

An N-terminal signal peptide occupies residues 1–7 (LLLGAVA). 2 cysteine pairs are disulfide-bonded: cysteine 12–cysteine 18 and cysteine 99–cysteine 110. Serine 161 functions as the Nucleophile in the catalytic mechanism. Catalysis depends on aspartate 185, which acts as the Charge relay system. Glutamate 196, arginine 199, aspartate 201, and aspartate 204 together coordinate Ca(2+). Cysteine 246 and cysteine 270 are joined by a disulfide. Histidine 272 (charge relay system) is an active-site residue. Disulfide bonds link cysteine 294/cysteine 305 and cysteine 308/cysteine 313. N-linked (GlcNAc...) asparagine glycosylation is present at asparagine 343. One can recognise a PLAT domain in the interval 347-457 (WRYQIAVTLS…EDILLTLTPC (111 aa)). Cysteines 441 and 457 form a disulfide.

This sequence belongs to the AB hydrolase superfamily. Lipase family. As to quaternary structure, forms a 1:1 stoichiometric complex with (pro)colipase/CLPS.

The protein localises to the secreted. It catalyses the reaction a triacylglycerol + H2O = a diacylglycerol + a fatty acid + H(+). The catalysed reaction is 1,2,3-tributanoylglycerol + H2O = dibutanoylglycerol + butanoate + H(+). It carries out the reaction 1,2,3-tri-(9Z-octadecenoyl)-glycerol + H2O = di-(9Z)-octadecenoylglycerol + (9Z)-octadecenoate + H(+). The enzyme catalyses all-trans-retinyl hexadecanoate + H2O = all-trans-retinol + hexadecanoate + H(+). It catalyses the reaction 1,2-di-(9Z-octadecenoyl)-glycerol + H2O = (9Z-octadecenoyl)-glycerol + (9Z)-octadecenoate + H(+). Its activity is regulated as follows. Inhibited by bile salts, is reactivated by (pro)colipase/CLPS. Its function is as follows. Plays an important role in fat metabolism. It preferentially splits the esters of long-chain fatty acids at positions 1 and 3, producing mainly 2-monoacylglycerol and free fatty acids, and shows considerably higher activity against insoluble emulsified substrates than against soluble ones. The polypeptide is Pancreatic triacylglycerol lipase (PNLIP) (Myocastor coypus (Coypu)).